The primary structure comprises 333 residues: MVTFLEKISERAKKLNKTIALPETEDIRTLQAAAKILERGIADIVLVGNEADIKALAGDLDLSKAKIVDPKTYEKKDEYINAFYELRKHKGITLENAAEIMSDYVYFAVMMAKLGEVDGVVSGAAHSSSDTLRPAVQIVKTAKGAALASAFFIISVPDCEYGSDGTFLFADSGMVEMPSVEDVANIAVISAKTFELLVQDVPKVAMLSYSTKGSAKSKLTEATIASTKLAQELAPDIAIDGELQVDAAIVPKVAASKAPGSPVAGKANVFIFPDLNCGNIAYKIAQRLAKAEAYGPITQGLAKPINDLSRGCSDEDIVGAVAITCVQAAAQDK.

Belongs to the phosphate acetyltransferase and butyryltransferase family. In terms of assembly, homodimer.

It localises to the cell membrane. It carries out the reaction acetyl-CoA + phosphate = acetyl phosphate + CoA. Its pathway is metabolic intermediate biosynthesis; acetyl-CoA biosynthesis; acetyl-CoA from acetate: step 2/2. This Methanosarcina thermophila protein is Phosphate acetyltransferase (pta).